The primary structure comprises 176 residues: Large ribosomal subunit protein eL20A (176 aa).

This sequence belongs to the eukaryotic ribosomal protein eL20 family. In terms of assembly, component of the large ribosomal subunit (LSU). Mature yeast ribosomes consist of a small (40S) and a large (60S) subunit. The 40S small subunit contains 1 molecule of ribosomal RNA (18S rRNA) and at least 33 different proteins. The large 60S subunit contains 3 rRNA molecules (25S, 5.8S and 5S rRNA) and at least 46 different proteins. eL20 forms multiple interactions with RNA and proteins in the central protuberance, connecting components of core functional centers that are located far apart.

The protein resides in the cytoplasm. Functionally, component of the ribosome, a large ribonucleoprotein complex responsible for the synthesis of proteins in the cell. The small ribosomal subunit (SSU) binds messenger RNAs (mRNAs) and translates the encoded message by selecting cognate aminoacyl-transfer RNA (tRNA) molecules. The large subunit (LSU) contains the ribosomal catalytic site termed the peptidyl transferase center (PTC), which catalyzes the formation of peptide bonds, thereby polymerizing the amino acids delivered by tRNAs into a polypeptide chain. The nascent polypeptides leave the ribosome through a tunnel in the LSU and interact with protein factors that function in enzymatic processing, targeting, and the membrane insertion of nascent chains at the exit of the ribosomal tunnel. The polypeptide is Large ribosomal subunit protein eL20A (rpl2001) (Schizosaccharomyces pombe (strain 972 / ATCC 24843) (Fission yeast)).